Consider the following 148-residue polypeptide: Large ribosomal subunit protein bL9 (148 aa).

This sequence belongs to the bacterial ribosomal protein bL9 family.

Its function is as follows. Binds to the 23S rRNA. The protein is Large ribosomal subunit protein bL9 of Bacillus cytotoxicus (strain DSM 22905 / CIP 110041 / 391-98 / NVH 391-98).